We begin with the raw amino-acid sequence, 753 residues long: MSAEASTTPAAETPVNGTPETSTTPAAPAAEATAAETAAPSTSQPHSASLYVGELDPSVTEAMLYELFSSIGQVASIRVCRDAVTRRSLGYAYVNYNNTADGERALEDLNYTLIKGKPCRIMWSQRDPALRKTGQGNVFIKNLDAAIDNKALHDTFAAFGNILSCKVAQDEFGNSKGYGFVHYETAEAANNAIKHVNGMLLNDKKVFVGHHISKKDRQSKFEEMKANFTNVYIKNLDQEISEEEFRQMFEKFGEITSATLSRDQEGKSRGFGFVNYSTHDSAQAAVDEMNDKEVKGQKLYVGRAQKKHEREEELRKQYEAARLEKASKYQGVNLYVKNLTDDIDDEKLREMFAPYGTITSAKVMRDTNIERTQTPDSDKEKKEESKEEKPEAAEKTEEAAKESGDDQDKENKKSDKKVLGKSKGFGFVCFSSPDEASKAVTEMNQRMINGKPLYVALAQRKDVRRSQLEASIQARNTIRQQQAAAAAGMPQPYMQPAVFYGPGQQGFIPGGQRGGLPFAPQPGMMMGVPGGRPGQYPGPFPGQQGGRGMGPNQQIPPNFAQGIPMGAMGPGGIPNGMGYPQMGQVQFGRGAGGRGQVPGMPMGQGMRGPGYGQGRGGVPVQGQMRPGQGGRGQNAQPAAGRGEEAPAAGLTAQSLAAAPAPQQKQMLGEALYPKIQAQQPELAGKITGMLLEMDNTELLSLLEDDEALRAKVDEALSVYDEYMKNKGTEGEAAGEAPKPKEAATEESTEENKS.

Low complexity predominate over residues 1–43 (MSAEASTTPAAETPVNGTPETSTTPAAPAAEATAAETAAPSTS). The segment at 1 to 49 (MSAEASTTPAAETPVNGTPETSTTPAAPAAEATAAETAAPSTSQPHSAS) is disordered. RRM domains are found at residues 48 to 126 (ASLY…WSQR), 136 to 213 (GNVF…HHIS), 229 to 306 (TNVY…RAQK), and 332 to 460 (VNLY…LAQR). Disordered regions lie at residues 363–417 (VMRD…SDKK), 607–649 (RGPG…PAAG), and 727–753 (GTEG…ENKS). Residues 376 to 417 (DSDKEKKEESKEEKPEAAEKTEEAAKESGDDQDKENKKSDKK) show a composition bias toward basic and acidic residues. Gly residues predominate over residues 607–619 (RGPGYGQGRGGVP). Over residues 633–649 (QNAQPAAGRGEEAPAAG) the composition is skewed to low complexity. In terms of domain architecture, PABC spans 647-724 (AAGLTAQSLA…ALSVYDEYMK (78 aa)). Residues 737–753 (PKPKEAATEESTEENKS) are compositionally biased toward basic and acidic residues.

This sequence belongs to the polyadenylate-binding protein type-1 family.

Its subcellular location is the cytoplasm. The protein localises to the nucleus. Binds the poly(A) tail of mRNA. Appears to be an important mediator of the multiple roles of the poly(A) tail in mRNA biogenesis, stability and translation. In the nucleus, involved in both mRNA cleavage and polyadenylation. Is also required for efficient mRNA export to the cytoplasm. Acts in concert with a poly(A)-specific nuclease (PAN) to affect poly(A) tail shortening, which may occur concomitantly with either nucleocytoplasmic mRNA transport or translational initiation. In the cytoplasm, stimulates translation initiation and regulates mRNA decay through translation termination-coupled poly(A) shortening, probably mediated by PAN. This chain is Polyadenylate-binding protein, cytoplasmic and nuclear (pab1), found in Aspergillus terreus (strain NIH 2624 / FGSC A1156).